A 1342-amino-acid polypeptide reads, in one-letter code: DNA-directed RNA polymerase subunit beta (1342 aa).

This sequence belongs to the RNA polymerase beta chain family. In terms of assembly, the RNAP catalytic core consists of 2 alpha, 1 beta, 1 beta' and 1 omega subunit. When a sigma factor is associated with the core the holoenzyme is formed, which can initiate transcription.

The catalysed reaction is RNA(n) + a ribonucleoside 5'-triphosphate = RNA(n+1) + diphosphate. Its function is as follows. DNA-dependent RNA polymerase catalyzes the transcription of DNA into RNA using the four ribonucleoside triphosphates as substrates. The protein is DNA-directed RNA polymerase subunit beta of Cronobacter sakazakii (strain ATCC BAA-894) (Enterobacter sakazakii).